Reading from the N-terminus, the 270-residue chain is MEYIKKIALYMSVLLLIIFIGGCGNMKDEQKKEEQTNKTDSKEEQIKKSFAKTLDMYPIKNLEDLYDKEGYRDGEFKKGDKGTWTILTGFSKSNKPGVLDDEGMVLYLNRNAKKATGYYFVNKVYDDISKNHNEKKYRVELKNNKIVLLDNVEDKKLKQKIENFKFFSQYADFKDLKNYQDGNITTNENVPSYEAQYKMNNSDKNVKKLREIYPITTNNSPNLKLYIDGDIKGSSVGYKKIEYKFSKDKGQETTLRDYLNFGPSEGENVE.

A signal peptide spans 1-22 (MEYIKKIALYMSVLLLIIFIGG). Cysteine 23 carries the N-palmitoyl cysteine lipid modification. Cysteine 23 carries S-diacylglycerol cysteine lipidation.

It belongs to the staphylococcal tandem lipoprotein family.

The protein localises to the cell membrane. This is an uncharacterized protein from Staphylococcus aureus (strain USA300).